An 82-amino-acid polypeptide reads, in one-letter code: Ubiquinol-cytochrome-c reductase complex assembly factor 3 (82 aa).

Topologically, residues Met1–Arg6 are mitochondrial matrix. Residues Ile7–Ala29 traverse the membrane as a helical segment. Residues Pro30–Ser82 are Mitochondrial intermembrane-facing.

Belongs to the UQCC3 family. In terms of assembly, associates with the ubiquinol-cytochrome c reductase complex (mitochondrial respiratory chain complex III or cytochrome b-c1 complex).

The protein resides in the mitochondrion inner membrane. Functionally, required for the assembly of the ubiquinol-cytochrome c reductase complex (mitochondrial respiratory chain complex III or cytochrome b-c1 complex), mediating cytochrome b recruitment and probably stabilization within the complex. Thereby, plays an important role in ATP production by mitochondria. Cardiolipin-binding protein, it may also control the cardiolipin composition of mitochondria membranes and their morphology. This Xenopus laevis (African clawed frog) protein is Ubiquinol-cytochrome-c reductase complex assembly factor 3.